The primary structure comprises 265 residues: 3-methyl-2-oxobutanoate hydroxymethyltransferase (265 aa).

Mg(2+)-binding residues include D44 and D83. 3-methyl-2-oxobutanoate-binding positions include 44–45, D83, and K113; that span reads DS. E115 contacts Mg(2+). Residue E183 is the Proton acceptor of the active site.

Belongs to the PanB family. Homodecamer; pentamer of dimers. Mg(2+) is required as a cofactor.

Its subcellular location is the cytoplasm. The enzyme catalyses 3-methyl-2-oxobutanoate + (6R)-5,10-methylene-5,6,7,8-tetrahydrofolate + H2O = 2-dehydropantoate + (6S)-5,6,7,8-tetrahydrofolate. It functions in the pathway cofactor biosynthesis; (R)-pantothenate biosynthesis; (R)-pantoate from 3-methyl-2-oxobutanoate: step 1/2. In terms of biological role, catalyzes the reversible reaction in which hydroxymethyl group from 5,10-methylenetetrahydrofolate is transferred onto alpha-ketoisovalerate to form ketopantoate. This is 3-methyl-2-oxobutanoate hydroxymethyltransferase from Leptospira borgpetersenii serovar Hardjo-bovis (strain JB197).